Consider the following 102-residue polypeptide: Beta-defensin 116 (102 aa).

Positions 1–23 (MSVMKPCLMTIAILMILAQKTPG) are cleaved as a signal peptide. 3 cysteine pairs are disulfide-bonded: Cys40–Cys67, Cys47–Cys61, and Cys51–Cys68. Positions 83–102 (EDYDSNSNLSVTNSSSYSHI) are disordered. Positions 87-102 (SNSNLSVTNSSSYSHI) are enriched in low complexity.

Belongs to the beta-defensin family.

Its subcellular location is the secreted. Its function is as follows. Has antibacterial activity. The chain is Beta-defensin 116 (DEFB116) from Homo sapiens (Human).